Consider the following 333-residue polypeptide: Adenosine deaminase (333 aa).

Zn(2+)-binding residues include H12 and H14. Substrate-binding residues include H14, D16, and G170. Zn(2+) is bound at residue H197. E200 functions as the Proton donor in the catalytic mechanism. D278 is a binding site for Zn(2+). D279 contributes to the substrate binding site.

This sequence belongs to the metallo-dependent hydrolases superfamily. Adenosine and AMP deaminases family. Adenosine deaminase subfamily. It depends on Zn(2+) as a cofactor.

The catalysed reaction is adenosine + H2O + H(+) = inosine + NH4(+). It catalyses the reaction 2'-deoxyadenosine + H2O + H(+) = 2'-deoxyinosine + NH4(+). Catalyzes the hydrolytic deamination of adenosine and 2-deoxyadenosine. The polypeptide is Adenosine deaminase (Klebsiella pneumoniae subsp. pneumoniae (strain ATCC 700721 / MGH 78578)).